Here is a 205-residue protein sequence, read N- to C-terminus: Transcriptional regulatory protein PdtaR (205 aa).

Positions 15–129 (RVLIAEDEAL…DLIPAIELAV (115 aa)) constitute a Response regulatory domain. The residue at position 65 (Asp65) is a 4-aspartylphosphate. The 62-residue stretch at 135-196 (ITALEGEVAT…TMKRVAEVVL (62 aa)) folds into the ANTAR domain.

Phosphorylated and activated by PdtaS.

Its subcellular location is the cytoplasm. Member of the two-component regulatory system PdtaR/PdtaS. This two-component system plays an essential role in mycobacterial adaptation to poor nutrient conditions. PdtaR probably acts at the level of transcriptional antitermination rather than transcriptional initiation. In terms of biological role, in addition, the PdtaR/PdtaS two-component system controls copper and nitric oxide (NO) resistance downstream of the intramembrane protease Rip1. This coupled Rip1/PdtaS/PdtaR circuit controls NO resistance and acute lung infection in mice by relieving PdtaR/PdtaS-mediated repression of isonitrile chalkophore biosynthesis. Two signals are required to fully inactivate the PdtaR/PdtaS system and mediate NO resistance: a cytoplasmic inhibitory signal through the PdtaS kinase mediated by direct sensing of NO and the production of PPE1-5', an NO-induced small RNA, to sequester PdtaR. In Mycobacterium tuberculosis (strain CDC 1551 / Oshkosh), this protein is Transcriptional regulatory protein PdtaR (pdtaR).